Here is a 208-residue protein sequence, read N- to C-terminus: Ribosome maturation factor RimP (208 aa).

A disordered region spans residues 175-208; it reads GEDVEDLVADPGADDELDELDELDELDDGDEDEQ. Residues 177-208 are compositionally biased toward acidic residues; it reads DVEDLVADPGADDELDELDELDELDDGDEDEQ.

The protein belongs to the RimP family.

The protein resides in the cytoplasm. Functionally, required for maturation of 30S ribosomal subunits. The chain is Ribosome maturation factor RimP from Kineococcus radiotolerans (strain ATCC BAA-149 / DSM 14245 / SRS30216).